We begin with the raw amino-acid sequence, 582 residues long: TRAF-type zinc finger domain-containing protein 1 (582 aa).

Ala-2 carries the N-acetylalanine modification. The TRAF-type zinc finger occupies 27–103 (IHEIHCQRNI…DLELSILKLK (77 aa)). Ser-191 is subject to Phosphoserine. The interval 217 to 236 (EQERQERNRGQQPPKEGGEE) is disordered. Residues Ser-278, Ser-320, Ser-326, Ser-327, Ser-409, Ser-415, Ser-430, and Ser-470 each carry the phosphoserine modification. The disordered stretch occupies residues 401–582 (TEGIPRLDSQ…AGDAEEEEEE (182 aa)). Composition is skewed to polar residues over residues 454–471 (PINN…STSG) and 486–495 (LSNSDSQDIQ).

As to quaternary structure, interacts with MAVS, TICAM1, TRAF1, TRAF2, TRAF3. Interacts with TRAF6.

In terms of biological role, negative feedback regulator that controls excessive innate immune responses. Regulates both Toll-like receptor 4 (TLR4) and DDX58/RIG1-like helicases (RLH) pathways. May inhibit the LTR pathway by direct interaction with TRAF6 and attenuation of NF-kappa-B activation. May negatively regulate the RLH pathway downstream from MAVS and upstream of NF-kappa-B and IRF3. The polypeptide is TRAF-type zinc finger domain-containing protein 1 (TRAFD1) (Homo sapiens (Human)).